The sequence spans 189 residues: Small ribosomal subunit protein uS5 (189 aa).

The 64-residue stretch at Phe20–Val83 folds into the S5 DRBM domain.

The protein belongs to the universal ribosomal protein uS5 family. In terms of assembly, part of the 30S ribosomal subunit. Contacts proteins S4 and S8.

Functionally, with S4 and S12 plays an important role in translational accuracy. Located at the back of the 30S subunit body where it stabilizes the conformation of the head with respect to the body. The protein is Small ribosomal subunit protein uS5 of Beijerinckia indica subsp. indica (strain ATCC 9039 / DSM 1715 / NCIMB 8712).